Consider the following 246-residue polypeptide: Eukaryotic translation initiation factor 6 (246 aa).

It belongs to the eIF-6 family. Monomer. Associates with the 60S ribosomal subunit.

Its subcellular location is the cytoplasm. It is found in the nucleus. The protein localises to the nucleolus. Binds to the 60S ribosomal subunit and prevents its association with the 40S ribosomal subunit to form the 80S initiation complex in the cytoplasm. May also be involved in ribosome biogenesis. Involved in miRNA-mediated gene silencing. This chain is Eukaryotic translation initiation factor 6, found in Caenorhabditis elegans.